Consider the following 676-residue polypeptide: DNA ligase (676 aa).

NAD(+)-binding positions include 34 to 38 (DQEFD), 83 to 84 (SL), and Glu-117. Lys-119 serves as the catalytic N6-AMP-lysine intermediate. NAD(+) contacts are provided by Arg-140, Glu-177, Lys-285, and Lys-309. Residues Cys-403, Cys-406, Cys-427, and Cys-434 each contribute to the Zn(2+) site. A BRCT domain is found at 595–676 (NNNGLLKNKT…EWLKMLNKSG (82 aa)).

This sequence belongs to the NAD-dependent DNA ligase family. LigA subfamily. Mg(2+) serves as cofactor. It depends on Mn(2+) as a cofactor.

It catalyses the reaction NAD(+) + (deoxyribonucleotide)n-3'-hydroxyl + 5'-phospho-(deoxyribonucleotide)m = (deoxyribonucleotide)n+m + AMP + beta-nicotinamide D-nucleotide.. Its function is as follows. DNA ligase that catalyzes the formation of phosphodiester linkages between 5'-phosphoryl and 3'-hydroxyl groups in double-stranded DNA using NAD as a coenzyme and as the energy source for the reaction. It is essential for DNA replication and repair of damaged DNA. This Pelagibacter ubique (strain HTCC1062) protein is DNA ligase.